We begin with the raw amino-acid sequence, 228 residues long: Elongation factor 1-beta (228 aa).

The disordered stretch occupies residues 74-116 (ASKAFTAYGPEGSEASANPKDKPAEEEEEEDLFASDSEDEDPA). The igE-binding stretch occupies residues 84–93 (EGSEASANPK). Residues 97–115 (AEEEEEEDLFASDSEDEDP) are compositionally biased toward acidic residues.

This sequence belongs to the EF-1-beta/EF-1-delta family. EF-1 is composed of 4 subunits: alpha, beta, delta, and gamma.

In terms of biological role, EF-1-beta and EF-1-delta stimulate the exchange of GDP bound to EF-1-alpha to GTP. In Penicillium citrinum, this protein is Elongation factor 1-beta.